The following is a 662-amino-acid chain: UvrABC system protein B (662 aa).

In terms of domain architecture, Helicase ATP-binding spans 25-182 (KGIEKREKFQ…KKLVEIQYER (158 aa)). ATP is bound at residue 38 to 45 (GVTGSGKT). The Beta-hairpin signature appears at 91-114 (YYDYYQPEAYVAQSDTYIEKDASI). The Helicase C-terminal domain occupies 429–595 (QIDDLYTSIQ…TIIKDIREVI (167 aa)). Residues 622 to 657 (DKLIEKYEEEMKEAAQNLQFEKAAHLRDVIYKLKKD) enclose the UVR domain.

It belongs to the UvrB family. Forms a heterotetramer with UvrA during the search for lesions. Interacts with UvrC in an incision complex.

It localises to the cytoplasm. Its function is as follows. The UvrABC repair system catalyzes the recognition and processing of DNA lesions. A damage recognition complex composed of 2 UvrA and 2 UvrB subunits scans DNA for abnormalities. Upon binding of the UvrA(2)B(2) complex to a putative damaged site, the DNA wraps around one UvrB monomer. DNA wrap is dependent on ATP binding by UvrB and probably causes local melting of the DNA helix, facilitating insertion of UvrB beta-hairpin between the DNA strands. Then UvrB probes one DNA strand for the presence of a lesion. If a lesion is found the UvrA subunits dissociate and the UvrB-DNA preincision complex is formed. This complex is subsequently bound by UvrC and the second UvrB is released. If no lesion is found, the DNA wraps around the other UvrB subunit that will check the other stand for damage. The polypeptide is UvrABC system protein B (Clostridium botulinum (strain Kyoto / Type A2)).